Consider the following 723-residue polypeptide: DNA-binding protein RFX2 (723 aa).

The tract at residues 1–46 (MQNSEGGADSPASVALRPSAAAPPVPASPQRVLVQAASSNPKGAQM) is disordered. Positions 10 to 20 (SPASVALRPSA) are enriched in low complexity. S28 carries the post-translational modification Phosphoserine. Residues 199-274 (HLQWLLDNYE…YHYYGIRLKP (76 aa)) constitute a DNA-binding region (RFX-type winged-helix). The interval 292-332 (QQPMHQKPRYRPAQKTDSLGDSGSHSGLHSTPEQTMAVQSQ) is disordered. Low complexity predominate over residues 308–321 (DSLGDSGSHSGLHS). Residues 322-332 (TPEQTMAVQSQ) are compositionally biased toward polar residues. At S416 the chain carries Phosphoserine. Residues 688-723 (MGDEQRGSEAGPDARSLGEPLVKRERSDPNHSLQGI) are disordered.

The protein belongs to the RFX family. As to quaternary structure, homodimer; probably only forms homodimers in testis. Heterodimer; heterodimerizes with RFX1 and RFX3.

It localises to the nucleus. The protein localises to the cytoplasm. Transcription factor that acts as a key regulator of spermatogenesis. Acts by regulating expression of genes required for the haploid phase during spermiogenesis, such as genes required for cilium assembly and function. Recognizes and binds the X-box, a regulatory motif with DNA sequence 5'-GTNRCC(0-3N)RGYAAC-3' present on promoters. Probably activates transcription of the testis-specific histone gene H1-6. The protein is DNA-binding protein RFX2 (RFX2) of Homo sapiens (Human).